A 146-amino-acid chain; its full sequence is Catabolic 3-dehydroquinase (146 aa).

Residue Tyr-24 is the Proton acceptor of the active site. Residues Asn-78, His-84, and Asp-91 each coordinate substrate. His-104 serves as the catalytic Proton donor. Substrate-binding positions include 105 to 106 (IT) and Arg-115.

The protein belongs to the type-II 3-dehydroquinase family. Homododecamer. Adopts a ring-like structure, composed of an arrangement of two hexameric rings stacked on top of one another.

The catalysed reaction is 3-dehydroquinate = 3-dehydroshikimate + H2O. It participates in aromatic compound metabolism; 3,4-dihydroxybenzoate biosynthesis; 3,4-dihydroxybenzoate from 3-dehydroquinate: step 1/2. In terms of biological role, is involved in the catabolism of quinate. Allows the utilization of quinate as carbon source via the beta-ketoadipate pathway. The sequence is that of Catabolic 3-dehydroquinase from Candida dubliniensis (strain CD36 / ATCC MYA-646 / CBS 7987 / NCPF 3949 / NRRL Y-17841) (Yeast).